The primary structure comprises 92 residues: C-C motif chemokine 3 (92 aa).

An N-terminal signal peptide occupies residues 1-23; that stretch reads MQVSTAALAVLLCTMALCNQFSA. Intrachain disulfides connect C33–C57 and C34–C73.

It belongs to the intercrine beta (chemokine CC) family. Self-associates. Also heterodimer of MIP-1-alpha(4-69) and MIP-1-beta(3-69). Interacts with CCR1.

It localises to the secreted. Functionally, monokine with inflammatory and chemokinetic properties. Binds to CCR1, CCR4 and CCR5. One of the major HIV-suppressive factors produced by CD8+ T-cells. Recombinant MIP-1-alpha induces a dose-dependent inhibition of different strains of HIV-1, HIV-2, and simian immunodeficiency virus (SIV). This is C-C motif chemokine 3 (CCL3) from Pan troglodytes (Chimpanzee).